We begin with the raw amino-acid sequence, 137 residues long: Cytochrome c2 (137 aa).

The signal sequence occupies residues Met1–Ala21. Positions 34, 37, 38, and 117 each coordinate heme c.

It belongs to the cytochrome c family. Binds 1 heme c group covalently per subunit.

In terms of biological role, cytochrome c2 is found mainly in purple, non-sulfur, photosynthetic bacteria where it functions as the electron donor to the oxidized bacteriochlorophyll in the photophosphorylation pathway. However, it may also have a role in the respiratory chain and is found in some non-photosynthetic bacteria. In Rhodobacter capsulatus (strain ATCC BAA-309 / NBRC 16581 / SB1003), this protein is Cytochrome c2 (cycA).